The sequence spans 251 residues: Protein PBMUCL2 (251 aa).

The first 22 residues, 1-22, serve as a signal peptide directing secretion; that stretch reads MPRYVPLLLLLLLLRCSERGGG. Disordered stretches follow at residues 36–55 and 65–251; these read WRDG…DRAS and LSQS…THLL. The segment covering 72–87 has biased composition (basic and acidic residues); that stretch reads KHPETSPKDSRIREND. Residue Asn-120 is glycosylated (N-linked (GlcNAc...) asparagine). Residues 150–164 are compositionally biased toward polar residues; that stretch reads TKDSVTADPGTTENF. The 15 X 11 AA approximate repeats stretch occupies residues 153-251; sequence SVTADPGTTE…TTKHGDTHLL (99 aa). Over residues 241-251 the composition is skewed to basic and acidic residues; the sequence is ETTKHGDTHLL.

Detected in the brain, lung, spleen, thymus and prostate.

It localises to the secreted. The polypeptide is Protein PBMUCL2 (HCG22) (Homo sapiens (Human)).